We begin with the raw amino-acid sequence, 245 residues long: Leucyl/phenylalanyl-tRNA--protein transferase (245 aa).

This sequence belongs to the L/F-transferase family.

The protein resides in the cytoplasm. The enzyme catalyses N-terminal L-lysyl-[protein] + L-leucyl-tRNA(Leu) = N-terminal L-leucyl-L-lysyl-[protein] + tRNA(Leu) + H(+). It carries out the reaction N-terminal L-arginyl-[protein] + L-leucyl-tRNA(Leu) = N-terminal L-leucyl-L-arginyl-[protein] + tRNA(Leu) + H(+). It catalyses the reaction L-phenylalanyl-tRNA(Phe) + an N-terminal L-alpha-aminoacyl-[protein] = an N-terminal L-phenylalanyl-L-alpha-aminoacyl-[protein] + tRNA(Phe). Its function is as follows. Functions in the N-end rule pathway of protein degradation where it conjugates Leu, Phe and, less efficiently, Met from aminoacyl-tRNAs to the N-termini of proteins containing an N-terminal arginine or lysine. This Paraburkholderia phytofirmans (strain DSM 17436 / LMG 22146 / PsJN) (Burkholderia phytofirmans) protein is Leucyl/phenylalanyl-tRNA--protein transferase.